A 233-amino-acid polypeptide reads, in one-letter code: Zinc import ATP-binding protein ZnuC (233 aa).

The ABC transporter domain maps to 6–222 (IEFRNVSKKF…SEFSNALSSL (217 aa)). 38 to 45 (GPNGAGKT) contacts ATP.

Belongs to the ABC transporter superfamily. Zinc importer (TC 3.A.1.15.5) family. In terms of assembly, the complex is composed of two ATP-binding proteins (ZnuC), two transmembrane proteins (ZnuB) and a solute-binding protein (ZnuA).

It localises to the cell inner membrane. It carries out the reaction Zn(2+)(out) + ATP(in) + H2O(in) = Zn(2+)(in) + ADP(in) + phosphate(in) + H(+)(in). Functionally, part of the ABC transporter complex ZnuABC involved in zinc import. Responsible for energy coupling to the transport system. This is Zinc import ATP-binding protein ZnuC from Rickettsia prowazekii (strain Madrid E).